Reading from the N-terminus, the 396-residue chain is Elongation factor Tu (396 aa).

The tr-type G domain occupies 10 to 206; the sequence is KPHINVGTIG…QMDAYIPEPQ (197 aa). The tract at residues 19–26 is G1; the sequence is GHVDHGKT. 19–26 is a GTP binding site; the sequence is GHVDHGKT. A Mg(2+)-binding site is contributed by T26. Residues 60–64 form a G2 region; that stretch reads GITIA. Residues 81–84 are G3; that stretch reads DCPG. GTP is bound by residues 81-85 and 136-139; these read DCPGH and NKAD. The tract at residues 136 to 139 is G4; it reads NKAD. Residues 174-176 are G5; it reads SAL.

The protein belongs to the TRAFAC class translation factor GTPase superfamily. Classic translation factor GTPase family. EF-Tu/EF-1A subfamily. In terms of assembly, monomer.

The protein localises to the cytoplasm. It carries out the reaction GTP + H2O = GDP + phosphate + H(+). In terms of biological role, GTP hydrolase that promotes the GTP-dependent binding of aminoacyl-tRNA to the A-site of ribosomes during protein biosynthesis. The sequence is that of Elongation factor Tu from Nitrosococcus oceani (strain ATCC 19707 / BCRC 17464 / JCM 30415 / NCIMB 11848 / C-107).